Here is a 346-residue protein sequence, read N- to C-terminus: tRNA/tmRNA (uracil-C(5))-methyltransferase (346 aa).

Positions 168, 197, 202, 218, and 278 each coordinate S-adenosyl-L-methionine. Cysteine 303 acts as the Nucleophile in catalysis. Residue glutamate 337 is the Proton acceptor of the active site.

The protein belongs to the class I-like SAM-binding methyltransferase superfamily. RNA M5U methyltransferase family. TrmA subfamily.

The enzyme catalyses uridine(54) in tRNA + S-adenosyl-L-methionine = 5-methyluridine(54) in tRNA + S-adenosyl-L-homocysteine + H(+). It carries out the reaction uridine(341) in tmRNA + S-adenosyl-L-methionine = 5-methyluridine(341) in tmRNA + S-adenosyl-L-homocysteine + H(+). Dual-specificity methyltransferase that catalyzes the formation of 5-methyluridine at position 54 (m5U54) in all tRNAs, and that of position 341 (m5U341) in tmRNA (transfer-mRNA). The protein is tRNA/tmRNA (uracil-C(5))-methyltransferase of Campylobacter lari (strain RM2100 / D67 / ATCC BAA-1060).